The chain runs to 649 residues: V-type ATP synthase subunit I (649 aa).

7 helical membrane-spanning segments follow: residues F312 to F332, F360 to V380, F453 to G473, I485 to V505, G520 to I540, V556 to V576, and I593 to I613.

It belongs to the V-ATPase 116 kDa subunit family.

The protein resides in the cell membrane. Produces ATP from ADP in the presence of a proton gradient across the membrane. This Chlamydia trachomatis serovar D (strain ATCC VR-885 / DSM 19411 / UW-3/Cx) protein is V-type ATP synthase subunit I (atpI).